The primary structure comprises 239 residues: DNA repair protein RecO (239 aa).

It belongs to the RecO family.

Involved in DNA repair and RecF pathway recombination. The polypeptide is DNA repair protein RecO (Stenotrophomonas maltophilia (strain K279a)).